A 122-amino-acid chain; its full sequence is Large ribosomal subunit protein bL12 (122 aa).

The interval 94-122 is disordered; it reads GNVKEGLSKEDAEEMKEKLEEAGATVELK. Over residues 99–114 the composition is skewed to basic and acidic residues; the sequence is GLSKEDAEEMKEKLEE.

This sequence belongs to the bacterial ribosomal protein bL12 family. In terms of assembly, homodimer. Part of the ribosomal stalk of the 50S ribosomal subunit. Forms a multimeric L10(L12)X complex, where L10 forms an elongated spine to which 2 to 4 L12 dimers bind in a sequential fashion. Binds GTP-bound translation factors.

Its function is as follows. Forms part of the ribosomal stalk which helps the ribosome interact with GTP-bound translation factors. Is thus essential for accurate translation. In Halanaerobium praevalens, this protein is Large ribosomal subunit protein bL12.